The following is a 462-amino-acid chain: Cysteine--tRNA ligase (462 aa).

Position 27 (cysteine 27) interacts with Zn(2+). The 'HIGH' region signature appears at 29 to 39; it reads PTVYNYIHVGN. Positions 209, 234, and 238 each coordinate Zn(2+). The short motif at 266–270 is the 'KMSKS' region element; it reads KMSKS. An ATP-binding site is contributed by lysine 269.

It belongs to the class-I aminoacyl-tRNA synthetase family. Monomer. Zn(2+) is required as a cofactor.

Its subcellular location is the cytoplasm. It catalyses the reaction tRNA(Cys) + L-cysteine + ATP = L-cysteinyl-tRNA(Cys) + AMP + diphosphate. This is Cysteine--tRNA ligase from Finegoldia magna (strain ATCC 29328 / DSM 20472 / WAL 2508) (Peptostreptococcus magnus).